The primary structure comprises 351 residues: Ferredoxin--NADP reductase (351 aa).

FAD is bound by residues Thr14, Asp33, Gln41, Tyr46, Ala86, Phe121, Asp287, and Thr328.

Belongs to the ferredoxin--NADP reductase type 2 family. In terms of assembly, homodimer. Requires FAD as cofactor.

The enzyme catalyses 2 reduced [2Fe-2S]-[ferredoxin] + NADP(+) + H(+) = 2 oxidized [2Fe-2S]-[ferredoxin] + NADPH. This is Ferredoxin--NADP reductase from Flavobacterium psychrophilum (strain ATCC 49511 / DSM 21280 / CIP 103535 / JIP02/86).